A 347-amino-acid chain; its full sequence is MDDQPRLMHSHPGVGMAGHPSLSQHMQDGTGANEGDVGRKQDIGDILQQIMTITDQSLDEAQARKHALNCHRMKPALFNVLCEIKEKTVLSIRGAQEEEPSDPQLMRLDNMLLAEGVAGPEKGGGSAAAAAAAAASGGAGADNSTEHSDYRAKLSQIRQIYHTELEKYEQACNEFTTHVMNLLREQSRTRPISPKEIERMVSIIHRKFSSIQMQLKQSTCEAVMILRSRFLDARRKRRNFNKQATEILNEYFYSHLSNPYPSEEAKEELAKKCAITVSQVSNWFGNKRIRYKKNIGKFQEEANIYAAKTAVNATNVSVHGSQANSPSTPSSAGGYPSPCYQSDRRIQ.

Residues 1–37 (MDDQPRLMHSHPGVGMAGHPSLSQHMQDGTGANEGDV) form a disordered region. The PBC domain maps to 38–232 (GRKQDIGDIL…VMILRSRFLD (195 aa)). The PBC-A stretch occupies residues 45-124 (DILQQIMTIT…EGVAGPEKGG (80 aa)). Residues 127 to 232 (AAAAAAAAAS…VMILRSRFLD (106 aa)) are PBC-B. The homeobox; TALE-type DNA-binding region spans 233-295 (ARRKRRNFNK…NKRIRYKKNI (63 aa)). Positions 318 to 331 (VHGSQANSPSTPSS) are enriched in polar residues. The disordered stretch occupies residues 318-347 (VHGSQANSPSTPSSAGGYPSPCYQSDRRIQ).

The protein belongs to the TALE/PBX homeobox family. Forms a heterodimer with isoform 2 of meis1; the interaction is necessary for neural fate induction. In terms of tissue distribution, shows broad, weak expression from blastula through gastrula stages. At stage 14/15, expressed in a broad arc that gives rise to the forebrain and eyes. More intensely expressed in the lateral neural folds (presumptive neural crest) and as horizontal stripes in the posterior neural plate that give rise to the hindbrain. As development proceeds, expression progresses posteriorly along the neural folds and at stage 21, expression is pronounced in the prospective hindbrain and in migratory neural crest cells. At later stages (stage 26), expression becomes intense within the dorsal portion of the forebrain, and in the optic cup, caudal branchial arch, peripheral to the pronephric anlage, and in the dorsal anterior half of the spinal cord. Expression remains robust in the hindbrain but gradually becomes more restricted. At stage 28, expressed in the dorsal lateral portion of the neural tube and in the somatic layer of the lateral plate mesoderm that surrounds the pronephric anlage.

It localises to the nucleus. Acts as a transcriptional activator in complex with isoform 2 of meis1, to induce posterior neural and neural crest gene expression, and thereby specify hindbrain and neural crest cell fate. Binds to a highly conserved region in the promoter of the neural crest gene zic3. Required for the nuclear transport or retention of isoform 2 of meis1. This Xenopus laevis (African clawed frog) protein is Pre-B-cell leukemia transcription factor 1 (pbx1).